The sequence spans 594 residues: Probable Xaa-Pro aminopeptidase P (594 aa).

Mn(2+) is bound by residues aspartate 391, aspartate 402, glutamate 500, and glutamate 514.

It belongs to the peptidase M24B family. The cofactor is Mn(2+).

It catalyses the reaction Release of any N-terminal amino acid, including proline, that is linked to proline, even from a dipeptide or tripeptide.. Functionally, catalyzes the removal of a penultimate prolyl residue from the N-termini of peptides. The chain is Probable Xaa-Pro aminopeptidase P (ampp) from Pyrenophora tritici-repentis (strain Pt-1C-BFP) (Wheat tan spot fungus).